Consider the following 252-residue polypeptide: 4-formylbenzenesulfonate dehydrogenase TsaC1/TsaC2 (252 aa).

NAD(+) is bound by residues 9 to 36 and aspartate 62; that span reads IVTGGASGFGAAIARRLSQAGAAVLVAD. Residue serine 142 participates in substrate binding. The active-site Proton acceptor is tyrosine 155. An NAD(+)-binding site is contributed by lysine 159.

It belongs to the short-chain dehydrogenases/reductases (SDR) family. Homodimer.

It carries out the reaction 4-formylbenzenesulfonate + NAD(+) + H2O = 4-sulfobenzoate + NADH + 2 H(+). In terms of biological role, involved in the toluene-4-sulfonate degradation pathway. Does not discriminate between the sulfonate and the carboxyl substituents and can also be involved in the p-toluenecarboxylate degradation pathway. This chain is 4-formylbenzenesulfonate dehydrogenase TsaC1/TsaC2 (tsaC1), found in Comamonas testosteroni (Pseudomonas testosteroni).